A 257-amino-acid polypeptide reads, in one-letter code: UPF0246 protein Sbal223_3241 (257 aa).

It belongs to the UPF0246 family.

The protein is UPF0246 protein Sbal223_3241 of Shewanella baltica (strain OS223).